We begin with the raw amino-acid sequence, 520 residues long: CBL-interacting serine/threonine-protein kinase 18 (520 aa).

Disordered regions lie at residues 1–29 (MAQALAQPPLVVTTVVPDPPPPPPPPHPK) and 48–67 (TDKDGNISPQSPRSPRSPRN). A compositionally biased stretch (pro residues) spans 17–29 (PDPPPPPPPPHPK). A compositionally biased stretch (low complexity) spans 55–66 (SPQSPRSPRSPR). A Protein kinase domain is found at 74-328 (YELGKLLGHG…IPEIMKNRWF (255 aa)). ATP contacts are provided by residues 80-88 (LGHGTFAKV) and lysine 103. Aspartate 196 (proton acceptor) is an active-site residue. An activation loop region spans residues 214–243 (DFGLSAVAEQLRQDGLCHTFCGTPAYIAPE). Serine 218 is modified (phosphoserine). Threonine 232 carries the post-translational modification Phosphothreonine. The disordered stretch occupies residues 349-368 (EDEEEEASSSGRSSTVSESD). The segment covering 356–366 (SSSGRSSTVSE) has biased composition (low complexity). The 25-residue stretch at 382–406 (PRPSSLNAFDIISFSSGFDLSGLFE) folds into the NAF domain. The tract at residues 410–439 (GEGTRFVSGAPVSKIISKLEEIAKIVSFTV) is PPI.

Belongs to the protein kinase superfamily. CAMK Ser/Thr protein kinase family. SNF1 subfamily. As to quaternary structure, interacts with CBL1 and CBL9. Requires Mn(2+) as cofactor.

The enzyme catalyses L-seryl-[protein] + ATP = O-phospho-L-seryl-[protein] + ADP + H(+). The catalysed reaction is L-threonyl-[protein] + ATP = O-phospho-L-threonyl-[protein] + ADP + H(+). In terms of biological role, CIPK serine-threonine protein kinases interact with CBL proteins. Binding of a CBL protein to the regulatory NAF domain of CIPK protein lead to the activation of the kinase in a calcium-dependent manner. This chain is CBL-interacting serine/threonine-protein kinase 18 (CIPK18), found in Arabidopsis thaliana (Mouse-ear cress).